Consider the following 316-residue polypeptide: MNKFKNIAVYGGGSFGTSLASLVARNCNNVTLFLRDEIILKEILYKKTNAQYLGDIELPTNLQATTNLSVIKDFELIIIAVPSYAFDDSIKLLKTYGISKEHTILVATKGLADNPTELFSDRLNTLLPDNPIGFLSGPNLAKELAKNLPASASIASLDIDIANKIAYNFSSKTFSTNTTIDIVTLQIAGALKNIFAIKSGIDLAREQGANSRATLIVGALKEITTLSKVLGGMQKNSDILLEAGVLGDLVLTCYSLGSRNTKFGYEFEISRDKKKFLCEYKELVEGREALKLVLDLIKKYNLHMPIVAEVASLILI.

NADPH contacts are provided by Ser-14, Phe-15, Arg-35, and Lys-109. Positions 109 and 137 each coordinate sn-glycerol 3-phosphate. NADPH is bound at residue Ala-141. The sn-glycerol 3-phosphate site is built by Lys-192, Asp-248, Ser-258, Arg-259, and Asn-260. Catalysis depends on Lys-192, which acts as the Proton acceptor. NADPH is bound at residue Arg-259. NADPH is bound by residues Leu-283 and Glu-285.

It belongs to the NAD-dependent glycerol-3-phosphate dehydrogenase family.

The protein resides in the cytoplasm. The enzyme catalyses sn-glycerol 3-phosphate + NAD(+) = dihydroxyacetone phosphate + NADH + H(+). It carries out the reaction sn-glycerol 3-phosphate + NADP(+) = dihydroxyacetone phosphate + NADPH + H(+). The protein operates within membrane lipid metabolism; glycerophospholipid metabolism. Functionally, catalyzes the reduction of the glycolytic intermediate dihydroxyacetone phosphate (DHAP) to sn-glycerol 3-phosphate (G3P), the key precursor for phospholipid synthesis. The chain is Glycerol-3-phosphate dehydrogenase [NAD(P)+] from Rickettsia prowazekii (strain Madrid E).